The primary structure comprises 716 residues: Zinc finger protein 840 (716 aa).

The 72-residue stretch at 42–113 (VRFRDVAVVF…EREVTGDPCP (72 aa)) folds into the KRAB domain. 18 consecutive C2H2-type zinc fingers follow at residues 151–173 (YECDDCGMAFGHVSQLTGHQKIH), 207–229 (FECNQCGETFNRPSKVIQHQSMH), 235–257 (YKCDVCQKAFRFLSSLSIHQRFH), 277–299 (FSCNFCGKTFHRFSEKTQHLLIH), 305–327 (YTCNYCKKEFNPYSKFILHQRTH), 333–355 (HKCDVCEKSFKSISNLNKHQKTH), 361–383 (FSCNECKKTFAQRTDLARHQQIH), 389–411 (FICSSCKKTFVRLSDLTQHKGTH), 417–439 (YQCTTCEKAFKYRSNFTKHQKTH), 445–467 (FACNECGKTYRLNWELNQHKKIH), 473–495 (YECGECGKRFNNNSNLNKHKKIH), 501–523 (FVCNQCGKAFSLNSKLSRHQRTH), 549–571 (FPCNECKKAFAQRMDLARHQQIH), 577–599 (FICSSCKKTFVRLSDLTQHKGTH), 605–627 (YQCTTCEKAFKYQSNFTKHQKTH), 633–655 (FTCNECGKTFRLNWKLNQHKKIH), 661–683 (YECGECGKCFNNNSNLSKHKKIH), and 689–711 (FVCNQCGKAFSLNSKLSRHQITH). The segment at 515 to 548 (KLSRHQRTHNKKENSSKSVSNLNKHQKTHAGEKP) is disordered.

This sequence belongs to the krueppel C2H2-type zinc-finger protein family.

Its subcellular location is the nucleus. In terms of biological role, may be involved in transcriptional regulation. The polypeptide is Zinc finger protein 840 (ZNF840P) (Homo sapiens (Human)).